The primary structure comprises 427 residues: CD209 antigen (427 aa).

Residues M1–C37 are Cytoplasmic-facing. Short sequence motifs (endocytosis signal) lie at residues L14 to L15, E16 to E18, and Y31 to L34. Residues L38–V58 traverse the membrane as a helical; Signal-anchor for type II membrane protein segment. The Extracellular portion of the chain corresponds to Q59–E427. N-linked (GlcNAc...) asparagine glycosylation occurs at N80. A run of 8 repeats spans residues K96–S118, K119–S141, K142–S164, K165–S187, K188–S210, K211–S233, K234–S256, and K257–P280. The segment at K96–P280 is 8 X approximate tandem repeats. 3 cysteine pairs are disulfide-bonded: C279/C290, C307/C400, and C379/C392. In terms of domain architecture, C-type lectin spans F286–K401. E370, N372, V374, E377, N388, and D389 together coordinate Ca(2+).

As to quaternary structure, homotetramer. Interacts with C1QBP; the interaction is indicative for a C1q:C1QBP:CD209 signaling complex. Interacts with ICAM2 and ICAM3 by binding to mannose-like carbohydrates. Interacts (via C-type lectin domain) with CEACAM1 (via Lewis X moieties); this interaction is regulated by the glycosylation pattern of CEACAM1 on cell types and regulates contact between dendritic cells and neutrophils.

It is found in the membrane. Its function is as follows. Pathogen-recognition receptor expressed on the surface of immature dendritic cells (DCs) and involved in initiation of primary immune response. Thought to mediate the endocytosis of pathogens which are subsequently degraded in lysosomal compartments. The receptor returns to the cell membrane surface and the pathogen-derived antigens are presented to resting T-cells via MHC class II proteins to initiate the adaptive immune response. Probably recognizes in a calcium-dependent manner high mannose N-linked oligosaccharides in a variety of pathogen antigens. Functionally, on DCs it is a high affinity receptor for ICAM2 and ICAM3 by binding to mannose-like carbohydrates. May act as a DC rolling receptor that mediates transendothelial migration of DC presursors from blood to tissues by binding endothelial ICAM2. Seems to regulate DC-induced T-cell proliferation by binding to ICAM3 on T-cells in the immunological synapse formed between DC and T-cells. The protein is CD209 antigen (CD209) of Gorilla gorilla gorilla (Western lowland gorilla).